The primary structure comprises 54 residues: Small, acid-soluble spore protein gamma-type (54 aa).

The tract at residues 1–54 (MAKKNRNKQQQEMQQQQQQHQAEFANEFAEGSSAEQARQQQQKAAGKRQKKNQQ) is disordered. 2 stretches are compositionally biased toward low complexity: residues 10–21 (QQEMQQQQQQHQ) and 29–44 (AEGS…QQKA). Residues 45-54 (AGKRQKKNQQ) are compositionally biased toward basic residues.

It belongs to the gamma-type SASP family.

SASP are proteins degraded in the first minutes of spore germination and provide amino acids for both new protein synthesis and metabolism. These proteins may be involved in dormant spore's high resistance to UV light. In Alkalihalophilus pseudofirmus (strain ATCC BAA-2126 / JCM 17055 / OF4) (Bacillus pseudofirmus), this protein is Small, acid-soluble spore protein gamma-type (sspA).